A 208-amino-acid chain; its full sequence is Ribonuclease HII (208 aa).

Residues 11–203 form the RNase H type-2 domain; that stretch reads GPVAGVDEAG…VAAAHEQWLK (193 aa). A divalent metal cation-binding residues include aspartate 17, glutamate 18, and aspartate 112.

It belongs to the RNase HII family. The cofactor is Mn(2+). Mg(2+) serves as cofactor.

Its subcellular location is the cytoplasm. The catalysed reaction is Endonucleolytic cleavage to 5'-phosphomonoester.. Its function is as follows. Endonuclease that specifically degrades the RNA of RNA-DNA hybrids. The sequence is that of Ribonuclease HII from Corynebacterium jeikeium (strain K411).